Here is a 209-residue protein sequence, read N- to C-terminus: Kynurenine formamidase (209 aa).

Residue W18 participates in substrate binding. 3 residues coordinate Zn(2+): H48, H52, and D54. H58 functions as the Proton donor/acceptor in the catalytic mechanism. Zn(2+)-binding residues include H160 and E172.

It belongs to the Cyclase 1 superfamily. KynB family. Homodimer. Requires Zn(2+) as cofactor.

It carries out the reaction N-formyl-L-kynurenine + H2O = L-kynurenine + formate + H(+). It functions in the pathway amino-acid degradation; L-tryptophan degradation via kynurenine pathway; L-kynurenine from L-tryptophan: step 2/2. Catalyzes the hydrolysis of N-formyl-L-kynurenine to L-kynurenine, the second step in the kynurenine pathway of tryptophan degradation. This is Kynurenine formamidase from Maricaulis maris (strain MCS10) (Caulobacter maris).